A 115-amino-acid chain; its full sequence is NADH-ubiquinone oxidoreductase chain 3 (115 aa).

3 consecutive transmembrane segments (helical) span residues 3 to 23 (LVMALLTNTALASLLVLIAFW), 55 to 75 (FFLVAITFLLFDLEVALLLPL), and 86 to 106 (TMLIMALTLISLLAISLAYEW).

Belongs to the complex I subunit 3 family. Core subunit of respiratory chain NADH dehydrogenase (Complex I) which is composed of 45 different subunits. Interacts with TMEM186. Interacts with TMEM242.

The protein resides in the mitochondrion inner membrane. It carries out the reaction a ubiquinone + NADH + 5 H(+)(in) = a ubiquinol + NAD(+) + 4 H(+)(out). Functionally, core subunit of the mitochondrial membrane respiratory chain NADH dehydrogenase (Complex I) which catalyzes electron transfer from NADH through the respiratory chain, using ubiquinone as an electron acceptor. Essential for the catalytic activity of complex I. The sequence is that of NADH-ubiquinone oxidoreductase chain 3 from Hippopotamus amphibius (Hippopotamus).